A 1201-amino-acid chain; its full sequence is Stress response protein nst1 (1201 aa).

Disordered stretches follow at residues methionine 1–leucine 178, asparagine 268–glutamate 341, glutamine 429–valine 478, glutamate 535–leucine 707, isoleucine 724–asparagine 848, glutamine 899–valine 952, and glutamate 1150–isoleucine 1169. A compositionally biased stretch (basic residues) spans asparagine 40–glutamine 50. The span at valine 84–proline 114 shows a compositional bias: basic and acidic residues. Over residues asparagine 116 to threonine 128 the composition is skewed to polar residues. Basic residues predominate over residues arginine 130–arginine 141. Composition is skewed to polar residues over residues glutamine 145–glutamine 164 and glycine 293–phenylalanine 302. 2 stretches are compositionally biased toward acidic residues: residues proline 313 to glutamate 341 and aspartate 441 to methionine 466. The stretch at lysine 520–leucine 673 forms a coiled coil. Composition is skewed to basic and acidic residues over residues glutamate 535–lysine 553 and glutamine 563–alanine 692. Residues glutamine 740–proline 767 show a composition bias toward polar residues. Composition is skewed to low complexity over residues serine 769–leucine 805 and proline 926–serine 938.

This sequence belongs to the NST1 family.

It localises to the cytoplasm. Functionally, may act as a negative regulator of salt tolerance. The chain is Stress response protein nst1 (nst1) from Aspergillus niger (strain ATCC MYA-4892 / CBS 513.88 / FGSC A1513).